A 308-amino-acid polypeptide reads, in one-letter code: Oxygen-dependent coproporphyrinogen-III oxidase (308 aa).

A substrate-binding site is contributed by serine 100. A divalent metal cation contacts are provided by histidine 104 and histidine 114. Catalysis depends on histidine 114, which acts as the Proton donor. Position 116-118 (asparagine 116–arginine 118) interacts with substrate. A divalent metal cation-binding residues include histidine 153 and histidine 183. An important for dimerization region spans residues tyrosine 248–lysine 283. Residue glycine 266–arginine 268 coordinates substrate.

The protein belongs to the aerobic coproporphyrinogen-III oxidase family. As to quaternary structure, homodimer. Requires a divalent metal cation as cofactor.

The protein resides in the cytoplasm. It carries out the reaction coproporphyrinogen III + O2 + 2 H(+) = protoporphyrinogen IX + 2 CO2 + 2 H2O. The protein operates within porphyrin-containing compound metabolism; protoporphyrin-IX biosynthesis; protoporphyrinogen-IX from coproporphyrinogen-III (O2 route): step 1/1. Functionally, involved in the heme biosynthesis. Catalyzes the aerobic oxidative decarboxylation of propionate groups of rings A and B of coproporphyrinogen-III to yield the vinyl groups in protoporphyrinogen-IX. This is Oxygen-dependent coproporphyrinogen-III oxidase from Francisella tularensis subsp. mediasiatica (strain FSC147).